Reading from the N-terminus, the 70-residue chain is Putative membrane protein insertion efficiency factor (70 aa).

Belongs to the UPF0161 family.

Its subcellular location is the cell inner membrane. Its function is as follows. Could be involved in insertion of integral membrane proteins into the membrane. In Rhizorhabdus wittichii (strain DSM 6014 / CCUG 31198 / JCM 15750 / NBRC 105917 / EY 4224 / RW1) (Sphingomonas wittichii), this protein is Putative membrane protein insertion efficiency factor.